The following is a 294-amino-acid chain: 4-hydroxy-tetrahydrodipicolinate synthase (294 aa).

T44 contributes to the pyruvate binding site. The active-site Proton donor/acceptor is the Y132. K161 functions as the Schiff-base intermediate with substrate in the catalytic mechanism. I203 contacts pyruvate.

It belongs to the DapA family. Homotetramer; dimer of dimers.

The protein resides in the cytoplasm. The catalysed reaction is L-aspartate 4-semialdehyde + pyruvate = (2S,4S)-4-hydroxy-2,3,4,5-tetrahydrodipicolinate + H2O + H(+). Its pathway is amino-acid biosynthesis; L-lysine biosynthesis via DAP pathway; (S)-tetrahydrodipicolinate from L-aspartate: step 3/4. Its function is as follows. Catalyzes the condensation of (S)-aspartate-beta-semialdehyde [(S)-ASA] and pyruvate to 4-hydroxy-tetrahydrodipicolinate (HTPA). The protein is 4-hydroxy-tetrahydrodipicolinate synthase of Aquifex aeolicus (strain VF5).